The following is a 429-amino-acid chain: Palmitoyltransferase SWF1 (429 aa).

At 1–3 (MGT) the chain is on the lumenal side. A helical membrane pass occupies residues 4–24 (IAIIAAVILGISFMTFVAFFG). The Cytoplasmic portion of the chain corresponds to 25–79 (RLPALRNTPISFLHRLIWIHLPNGILTVDRTLTNGRLTTSLTRLGRHLWYDQHPT). Residues 80–100 (ILIFFFLLLSVGEYLYLPVAW) form a helical membrane-spanning segment. At 101–112 (PHFSFTHKFFGT) the chain is on the lumenal side. Residues 113–133 (IAILCPYIFLYLSAYTDPGVI) traverse the membrane as a helical segment. Topologically, residues 134 to 201 (NAKTHVREMA…CVGANNQRWF (68 aa)) are cytoplasmic. Residues 156-206 (TSCETCHLLKPARSKHCSICKKCVGRMDHHCIFINNCVGANNQRWFILLLL) form the DHHC domain. The chain crosses the membrane as a helical span at residues 202–222 (ILLLLSTAILTLYGGVLGLVI). At 223-274 (IRAKIQARFPYWTLMPWWTSTQAWNSGDLDFHRWLLLWSWGLQSGVAMGGVT) the chain is on the lumenal side. A helical membrane pass occupies residues 275–295 (LLALLTTPLVWGLLGYHLWLV). The Cytoplasmic portion of the chain corresponds to 296–429 (YCGTTTNESM…ERGRNRRRSS (134 aa)). The span at 408-421 (GRSPVDEREFGRER) shows a compositional bias: basic and acidic residues. The segment at 408–429 (GRSPVDEREFGRERGRNRRRSS) is disordered.

The protein belongs to the DHHC palmitoyltransferase family. SWF1 subfamily.

It localises to the endoplasmic reticulum membrane. The catalysed reaction is L-cysteinyl-[protein] + hexadecanoyl-CoA = S-hexadecanoyl-L-cysteinyl-[protein] + CoA. Its function is as follows. Palmitoyltransferase that targets several endosomal SNAREs. Palmitoylates the SNAREs at cysteine residues close to the cytoplasmic end of their transmembrane domain. May have a role in the cellular quality control of transmembrane domain-containing proteins. The sequence is that of Palmitoyltransferase SWF1 (swf-1) from Neurospora crassa (strain ATCC 24698 / 74-OR23-1A / CBS 708.71 / DSM 1257 / FGSC 987).